A 355-amino-acid polypeptide reads, in one-letter code: 3-dehydroquinate synthase (355 aa).

NAD(+) contacts are provided by residues 98–102 (GVIGD), 122–123 (TT), lysine 135, lysine 144, and 162–165 (TLNT). Zn(2+) is bound by residues glutamate 177, histidine 240, and histidine 257.

This sequence belongs to the sugar phosphate cyclases superfamily. Dehydroquinate synthase family. The cofactor is Co(2+). Zn(2+) serves as cofactor. It depends on NAD(+) as a cofactor.

The protein localises to the cytoplasm. The catalysed reaction is 7-phospho-2-dehydro-3-deoxy-D-arabino-heptonate = 3-dehydroquinate + phosphate. The protein operates within metabolic intermediate biosynthesis; chorismate biosynthesis; chorismate from D-erythrose 4-phosphate and phosphoenolpyruvate: step 2/7. Its function is as follows. Catalyzes the conversion of 3-deoxy-D-arabino-heptulosonate 7-phosphate (DAHP) to dehydroquinate (DHQ). The protein is 3-dehydroquinate synthase of Dictyoglomus thermophilum (strain ATCC 35947 / DSM 3960 / H-6-12).